The primary structure comprises 121 residues: Large ribosomal subunit protein eL18 (121 aa).

It belongs to the eukaryotic ribosomal protein eL18 family.

The protein is Large ribosomal subunit protein eL18 of Methanosphaerula palustris (strain ATCC BAA-1556 / DSM 19958 / E1-9c).